The primary structure comprises 307 residues: Elongation factor Ts (307 aa).

The involved in Mg(2+) ion dislocation from EF-Tu stretch occupies residues 79-82 (TDFV).

This sequence belongs to the EF-Ts family.

The protein resides in the cytoplasm. Functionally, associates with the EF-Tu.GDP complex and induces the exchange of GDP to GTP. It remains bound to the aminoacyl-tRNA.EF-Tu.GTP complex up to the GTP hydrolysis stage on the ribosome. In Bartonella tribocorum (strain CIP 105476 / IBS 506), this protein is Elongation factor Ts.